The chain runs to 80 residues: MKNIEERIKKIIFEKLDIKQEKIFNDASFIDDLGADSLDTVELIMALEEEFDIEISDEEAEKINTVQKSIDFIQKKNLKK.

The 76-residue stretch at 2 to 77 (KNIEERIKKI…KSIDFIQKKN (76 aa)) folds into the Carrier domain. S37 bears the O-(pantetheine 4'-phosphoryl)serine mark.

It belongs to the acyl carrier protein (ACP) family. Post-translationally, 4'-phosphopantetheine is transferred from CoA to a specific serine of apo-ACP by AcpS. This modification is essential for activity because fatty acids are bound in thioester linkage to the sulfhydryl of the prosthetic group.

The protein localises to the cytoplasm. Its pathway is lipid metabolism; fatty acid biosynthesis. Carrier of the growing fatty acid chain in fatty acid biosynthesis. The chain is Acyl carrier protein from Buchnera aphidicola subsp. Acyrthosiphon pisum (strain APS) (Acyrthosiphon pisum symbiotic bacterium).